Here is a 491-residue protein sequence, read N- to C-terminus: MKYQAKNTALSQATDCIVLGVYENNKFSKSFNEIDQLTQGYLNDLVKSGELTGKLAQTVLLRDLQGLSAKRLLIVGCGKKGELTERQYKQIIQAVLKTLKETNTREVISYLTEIELKDRDLYWNIRFAIETIEHTNYQFDHFKSQKAETSVLESFIFNTDCAQAQQAISHANAISSGIKAARDIANMPPNICNPAYLAEQAKNLAENSTALSLKVVDEEEMAKLGMNAYLAVSKGSENRAYMSVLTFNNAPDKNAKPIVLVGKGLTFDAGGISLKPAADMDEMKYDMCGAASVFGTMKTIAQLNLPLNVIGVLAGCENLPDGNAYRPGDILTTMNGLTVEVLNTDAEGRLVLCDTLTYVERFEPELVIDVATLTGACVVALGQHNSGLVSTDNNLANALLQAATETTDKAWRLPLSEEYQEQLKSPFADLANIGGRWGGAITAGAFLSNFTKKYRWAHLDIAGTAWLQGANKGATGRPVSLLTQFLINQVK.

Mn(2+) contacts are provided by K263 and D268. K275 is a catalytic residue. The Mn(2+) site is built by D286, D345, and E347. R349 is an active-site residue.

The protein belongs to the peptidase M17 family. Mn(2+) is required as a cofactor.

Its subcellular location is the cytoplasm. It carries out the reaction Release of an N-terminal amino acid, Xaa-|-Yaa-, in which Xaa is preferably Leu, but may be other amino acids including Pro although not Arg or Lys, and Yaa may be Pro. Amino acid amides and methyl esters are also readily hydrolyzed, but rates on arylamides are exceedingly low.. The catalysed reaction is Release of an N-terminal amino acid, preferentially leucine, but not glutamic or aspartic acids.. Functionally, presumably involved in the processing and regular turnover of intracellular proteins. Catalyzes the removal of unsubstituted N-terminal amino acids from various peptides. This chain is Cytosol aminopeptidase (pepA), found in Haemophilus influenzae (strain ATCC 51907 / DSM 11121 / KW20 / Rd).